Here is a 294-residue protein sequence, read N- to C-terminus: 33 kDa chaperonin (294 aa).

2 disulfide bridges follow: Cys-238-Cys-240 and Cys-271-Cys-274.

The protein belongs to the HSP33 family. Post-translationally, under oxidizing conditions two disulfide bonds are formed involving the reactive cysteines. Under reducing conditions zinc is bound to the reactive cysteines and the protein is inactive.

It localises to the cytoplasm. Functionally, redox regulated molecular chaperone. Protects both thermally unfolding and oxidatively damaged proteins from irreversible aggregation. Plays an important role in the bacterial defense system toward oxidative stress. The chain is 33 kDa chaperonin from Staphylococcus haemolyticus (strain JCSC1435).